The following is a 324-amino-acid chain: Viral cathepsin (324 aa).

The first 16 residues, 1 to 16 (MNKIMLCLLVCGVVHA), serve as a signal peptide directing secretion. The propeptide at 17 to 113 (ATYDLLKAPN…VILDRPPDRG (97 aa)) is activation peptide. 3 disulfides stabilise this stretch: cysteine 134–cysteine 175, cysteine 168–cysteine 208, and cysteine 263–cysteine 311. Cysteine 137 is a catalytic residue. N-linked (GlcNAc...) asparagine; by host glycosylation occurs at asparagine 159. Catalysis depends on residues histidine 270 and asparagine 290.

This sequence belongs to the peptidase C1 family. In terms of processing, synthesized as an inactive proenzyme and activated by proteolytic removal of the inhibitory propeptide.

It catalyses the reaction Endopeptidase of broad specificity, hydrolyzing substrates of both cathepsin L and cathepsin B.. Cysteine protease that plays an essential role in host liquefaction to facilitate horizontal transmission of the virus. May participate in the degradation of foreign protein expressed by the baculovirus system. This chain is Viral cathepsin (VCATH), found in Orgyia pseudotsugata (Douglas-fir tussock moth).